The primary structure comprises 544 residues: Secreted aspartic protease 9 (544 aa).

The N-terminal stretch at 1–17 (MRLNSVALLSLVATALA) is a signal peptide. Residues 31-50 (GESKDDLSPEDDSNPRFVKR) form a disordered region. The Peptidase A1 domain maps to 65–479 (YMATLKIGSN…DLDDYEVSLA (415 aa)). The active site involves aspartate 83. Residue 83–85 (DTG) participates in pepstatin A binding. Cysteine 98 and cysteine 195 are joined by a disulfide. Asparagine 212, asparagine 240, and asparagine 252 each carry an N-linked (GlcNAc...) asparagine glycan. Aspartate 371 is an active-site residue. Residue 371 to 375 (DTGST) participates in pepstatin A binding. Cysteines 406 and 441 form a disulfide. N-linked (GlcNAc...) asparagine glycans are attached at residues asparagine 422 and asparagine 499. The segment at 500–519 (SSGSGTTSSSGTSTSTSTRH) is disordered. Serine 520 carries the GPI-anchor amidated serine lipid modification. A propeptide spans 521-544 (AGSIISKPVYGLLLSLLISCYVLV) (removed in mature form). The chain crosses the membrane as a helical span at residues 524-544 (IISKPVYGLLLSLLISCYVLV).

It belongs to the peptidase A1 family. Monomer. The GPI-anchor is attached to the protein in the endoplasmic reticulum and serves to target the protein to the cell surface. There, the glucosamine-inositol phospholipid moiety is cleaved off and the GPI-modified mannoprotein is covalently attached via its lipidless GPI glycan remnant to the 1,6-beta-glucan of the outer cell wall layer.

It localises to the cell membrane. The protein resides in the secreted. Its subcellular location is the cell wall. It carries out the reaction Preferential cleavage at the carboxyl of hydrophobic amino acids, but fails to cleave 15-Leu-|-Tyr-16, 16-Tyr-|-Leu-17 and 24-Phe-|-Phe-25 of insulin B chain. Activates trypsinogen, and degrades keratin.. Functionally, secreted aspartic peptidases (SAPs) are a group of ten acidic hydrolases considered as key virulence factors. These enzymes supply the fungus with nutrient amino acids as well as are able to degrade the selected host's proteins involved in the immune defense. Moreover, acts toward human hemoglobin though limited proteolysis to generate a variety of antimicrobial hemocidins, enabling to compete with the other microorganisms of the same physiological niche using the microbicidal peptides generated from the host protein. Plays a key role in defense against host by cleaving histatin-5 (Hst 5), a peptide from human saliva that carries out fungicidal activity. The cleavage rate decreases in an order of SAP2 &gt; SAP9 &gt; SAP3 &gt; SAP7 &gt; SAP4 &gt; SAP1 &gt; SAP8. The first cleavage occurs between residues 'Lys-17' and 'His-18' of Hst 5, giving DSHAKRHHGYKRKFHEK and HHSHRGY peptides. Simultaneously, the DSHAKRHHGYKRK peptide is also formed. Further fragmentation by SAP9 results in FHEK product. The protein is Secreted aspartic protease 9 of Candida albicans (strain SC5314 / ATCC MYA-2876) (Yeast).